Here is a 237-residue protein sequence, read N- to C-terminus: Phosphoribosylaminoimidazole-succinocarboxamide synthase (237 aa).

It belongs to the SAICAR synthetase family.

The catalysed reaction is 5-amino-1-(5-phospho-D-ribosyl)imidazole-4-carboxylate + L-aspartate + ATP = (2S)-2-[5-amino-1-(5-phospho-beta-D-ribosyl)imidazole-4-carboxamido]succinate + ADP + phosphate + 2 H(+). Its pathway is purine metabolism; IMP biosynthesis via de novo pathway; 5-amino-1-(5-phospho-D-ribosyl)imidazole-4-carboxamide from 5-amino-1-(5-phospho-D-ribosyl)imidazole-4-carboxylate: step 1/2. The sequence is that of Phosphoribosylaminoimidazole-succinocarboxamide synthase from Methanosarcina acetivorans (strain ATCC 35395 / DSM 2834 / JCM 12185 / C2A).